The primary structure comprises 394 residues: Elongation factor Tu 1 (394 aa).

In terms of domain architecture, tr-type G spans 10–204 (KPHVNVGTIG…FLDSYIPEPE (195 aa)). The tract at residues 19 to 26 (GHVDHGKT) is G1. Residue 19–26 (GHVDHGKT) participates in GTP binding. Residue Thr-26 coordinates Mg(2+). The tract at residues 60–64 (GITIN) is G2. The interval 81–84 (DCPG) is G3. GTP is bound by residues 81–85 (DCPGH) and 136–139 (NKCD). The interval 136-139 (NKCD) is G4. Positions 174-176 (SAL) are G5.

This sequence belongs to the TRAFAC class translation factor GTPase superfamily. Classic translation factor GTPase family. EF-Tu/EF-1A subfamily. Monomer.

The protein localises to the cytoplasm. It carries out the reaction GTP + H2O = GDP + phosphate + H(+). Functionally, GTP hydrolase that promotes the GTP-dependent binding of aminoacyl-tRNA to the A-site of ribosomes during protein biosynthesis. The polypeptide is Elongation factor Tu 1 (Shigella sonnei (strain Ss046)).